Reading from the N-terminus, the 650-residue chain is 1-deoxy-D-xylulose-5-phosphate synthase (650 aa).

Positions 1-13 are enriched in basic and acidic residues; it reads MSKIKNDKRETGH. Positions 1–23 are disordered; it reads MSKIKNDKRETGHLKSPPETPLL. Thiamine diphosphate contacts are provided by residues histidine 92 and 133–135; that span reads AHS. Aspartate 164 is a binding site for Mg(2+). Residues 165 to 166, asparagine 193, tyrosine 302, and glutamate 384 each bind thiamine diphosphate; that span reads GA. Mg(2+) is bound at residue asparagine 193.

Belongs to the transketolase family. DXPS subfamily. In terms of assembly, homodimer. It depends on Mg(2+) as a cofactor. Requires thiamine diphosphate as cofactor.

The catalysed reaction is D-glyceraldehyde 3-phosphate + pyruvate + H(+) = 1-deoxy-D-xylulose 5-phosphate + CO2. It participates in metabolic intermediate biosynthesis; 1-deoxy-D-xylulose 5-phosphate biosynthesis; 1-deoxy-D-xylulose 5-phosphate from D-glyceraldehyde 3-phosphate and pyruvate: step 1/1. Its function is as follows. Catalyzes the acyloin condensation reaction between C atoms 2 and 3 of pyruvate and glyceraldehyde 3-phosphate to yield 1-deoxy-D-xylulose-5-phosphate (DXP). The chain is 1-deoxy-D-xylulose-5-phosphate synthase from Chelativorans sp. (strain BNC1).